Here is a 250-residue protein sequence, read N- to C-terminus: Probable transcriptional regulatory protein RER_29220 (250 aa).

Belongs to the TACO1 family.

It localises to the cytoplasm. The chain is Probable transcriptional regulatory protein RER_29220 from Rhodococcus erythropolis (strain PR4 / NBRC 100887).